Reading from the N-terminus, the 211-residue chain is Endo-1,4-beta-xylanase 5 (211 aa).

A signal peptide spans 1–16 (MKVTAAFASLLLTAFA). The GH11 domain occupies 19–210 (APEPVLVSRS…GVGSASVTIS (192 aa)). Glu-106 acts as the Nucleophile in catalysis. The Proton donor role is filled by Glu-197.

This sequence belongs to the glycosyl hydrolase 11 (cellulase G) family.

The protein resides in the secreted. The enzyme catalyses Endohydrolysis of (1-&gt;4)-beta-D-xylosidic linkages in xylans.. Its pathway is glycan degradation; xylan degradation. Its function is as follows. Endo-1,4-beta-xylanase involved in the hydrolysis of xylan, a major structural heterogeneous polysaccharide found in plant biomass representing the second most abundant polysaccharide in the biosphere, after cellulose. The sequence is that of Endo-1,4-beta-xylanase 5 (XYN5) from Aspergillus niger.